Reading from the N-terminus, the 1031-residue chain is LRR receptor-like serine/threonine-protein kinase EFR (1031 aa).

An N-terminal signal peptide occupies residues 1–24; sequence MKLSFSLVFNALTLLLQVCIFAQA. Residues 25–653 lie on the Extracellular side of the membrane; sequence RFSNETDMQA…LSVRKKVVSG (629 aa). Residues Asn28, Asn55, and Asn95 are each glycosylated (N-linked (GlcNAc...) asparagine). LRR repeat units follow at residues 98–120, 122–144, 146–168, 170–193, 194–216, 218–240, 242–264, 267–289, 291–312, and 315–335; these read FLRL…VGRL, RLQY…LSNC, RLST…LGSL, KLAI…GNLT, SLQK…VARL, QMVF…LYNI, SLES…FGYL, NLRR…LANI, SLER…SFGK, and NLWW…SGLE. Asn127 and Asn143 each carry an N-linked (GlcNAc...) asparagine glycan. N-linked (GlcNAc...) asparagine glycans are attached at residues Asn180 and Asn191. N-linked (GlcNAc...) asparagine glycosylation occurs at Asn239. An N-linked (GlcNAc...) asparagine glycan is attached at Asn288. N-linked (GlcNAc...) asparagine glycosylation is found at Asn323, Asn329, Asn342, and Asn366. 11 LRR repeats span residues 345-368, 370-392, 394-416, 418-440, 442-464, 466-487, 490-512, 514-536, 538-560, 561-584, and 585-597; these read QLEY…ANLS, TLTS…IGNL, SLQE…FGKL, NLQV…FGNM, RLQK…LGRC, YLLD…EILQ, SLAY…VGKL, LLVG…IGGC, SMEF…SRLV, SLKN…ASLP, and SLRN…NKFE. A glycan (N-linked (GlcNAc...) asparagine) is linked at Asn439. Asn478 carries N-linked (GlcNAc...) asparagine glycosylation. 3 N-linked (GlcNAc...) asparagine glycosylation sites follow: Asn571, Asn590, and Asn608. A helical transmembrane segment spans residues 654-674; it reads ICIGIASLLLIIIVASLCWFM. At 675–1031 the chain is on the cytoplasmic side; sequence KRKKKNNASD…WMLNTDMHTM (357 aa). Thr709 carries the phosphothreonine modification. The Protein kinase domain occupies 712 to 1001; that stretch reads FSSTNLIGSG…ELISIRSKFF (290 aa). ATP contacts are provided by residues 718–726 and Lys741; that span reads IGSGNFGNV. Residues Tyr791 and Tyr836 each carry the phosphotyrosine modification. Asp849 (proton acceptor) is an active-site residue. Tyr897 is subject to Phosphotyrosine. A compositionally biased stretch (polar residues) spans 1005 to 1020; the sequence is TTITESPRDAPQSSPQ. The tract at residues 1005–1031 is disordered; sequence TTITESPRDAPQSSPQEWMLNTDMHTM.

This sequence belongs to the protein kinase superfamily. Ser/Thr protein kinase family. As to quaternary structure, binds to Pseudomonas syringae AvrPto1 and (via the kinase and cytoplasmic domains) to hopD2. Interacts with SERK3/BAK1, SERK4/BKK1, SERK1 and SERK2 in a specific ligand-induced manner. Binds to IOS1. Binds to BIK1 in the absence of pathogen elicitor; dissociates upon pathogen-associated molecular pattern (PAMP)-triggered activation. Post-translationally, autophosphorylated after elicitation with elfl18. Autophosphorylation is inhibited by the binding with avrPto1. Phosphorylation at T-836 is required for immune signaling. Polyubiquitinated at the kinase domain mediated by P.syringae AvrPtoB.

Its subcellular location is the cell membrane. The protein localises to the endomembrane system. It carries out the reaction L-seryl-[protein] + ATP = O-phospho-L-seryl-[protein] + ADP + H(+). It catalyses the reaction L-threonyl-[protein] + ATP = O-phospho-L-threonyl-[protein] + ADP + H(+). Constitutes the pattern-recognition receptor (PPR) that determines the specific perception of elongation factor Tu (EF-Tu), a potent elicitor of the defense response to pathogen-associated molecular patterns (PAMPs); phosphorylates BIK1 upon elicitation to regulate immune responses such as defense hormone expression (e.g. jasmonic acid (JA) and salicylic acid (SA)). Reduces transformation by Rhizobium radiobacter probably by inducing plant defense during the interaction. Binding to the effector AvrPto1 from P.syringae blocks the downstream plant immune response while interaction with hopD2 decreases the phosphorylation level of EFR upon elf18 treatment. Specific endoplasmic reticulum quality control components (ERD2B, CRT3, UGGT and STT3A) are required for the biogenesis of EFR. This chain is LRR receptor-like serine/threonine-protein kinase EFR, found in Arabidopsis thaliana (Mouse-ear cress).